Reading from the N-terminus, the 128-residue chain is Small ribosomal subunit protein uS9 (128 aa).

The span at arginine 97–lysine 113 shows a compositional bias: basic and acidic residues. Residues arginine 97–arginine 128 form a disordered region. Positions proline 114–arginine 128 are enriched in basic residues.

The protein belongs to the universal ribosomal protein uS9 family.

The chain is Small ribosomal subunit protein uS9 from Phocaeicola vulgatus (strain ATCC 8482 / DSM 1447 / JCM 5826 / CCUG 4940 / NBRC 14291 / NCTC 11154) (Bacteroides vulgatus).